A 737-amino-acid polypeptide reads, in one-letter code: Elongation factor 2 (737 aa).

The 245-residue stretch at 18–262 (TRVRNIGIIA…AVIKFVPNPR (245 aa)) folds into the tr-type G domain. GTP contacts are provided by residues 27–34 (AHVDHGKT), 93–97 (DTPGH), and 147–150 (NKVD). Diphthamide is present on histidine 604.

The protein belongs to the TRAFAC class translation factor GTPase superfamily. Classic translation factor GTPase family. EF-G/EF-2 subfamily.

Its subcellular location is the cytoplasm. Its function is as follows. Catalyzes the GTP-dependent ribosomal translocation step during translation elongation. During this step, the ribosome changes from the pre-translocational (PRE) to the post-translocational (POST) state as the newly formed A-site-bound peptidyl-tRNA and P-site-bound deacylated tRNA move to the P and E sites, respectively. Catalyzes the coordinated movement of the two tRNA molecules, the mRNA and conformational changes in the ribosome. The sequence is that of Elongation factor 2 (fusA) from Sulfolobus acidocaldarius (strain ATCC 33909 / DSM 639 / JCM 8929 / NBRC 15157 / NCIMB 11770).